The primary structure comprises 360 residues: Photosystem II protein D1 (360 aa).

3 helical membrane passes run 29–46 (YIGW…TATS), 118–133 (HFLL…EWEL), and 142–156 (WISV…AAAA). His-118 is a binding site for chlorophyll a. Position 126 (Tyr-126) interacts with pheophytin a. 2 residues coordinate [CaMn4O5] cluster: Asp-170 and Glu-189. The helical transmembrane segment at 197-218 (FHQLGVAGVFGGSLFSAMHGSL) threads the bilayer. His-198 contributes to the chlorophyll a binding site. A quinone-binding positions include His-215 and 264 to 265 (SF). A Fe cation-binding site is contributed by His-215. His-272 lines the Fe cation pocket. Residues 274–288 (FLGAWPVVGIWLTSM) traverse the membrane as a helical segment. 4 residues coordinate [CaMn4O5] cluster: His-332, Glu-333, Asp-342, and Ala-344. Positions 345-360 (SGDSCPVALVAPSING) are excised as a propeptide.

It belongs to the reaction center PufL/M/PsbA/D family. PSII is composed of 1 copy each of membrane proteins PsbA, PsbB, PsbC, PsbD, PsbE, PsbF, PsbH, PsbI, PsbJ, PsbK, PsbL, PsbM, PsbT, PsbX, PsbY, PsbZ, Psb30/Ycf12, at least 3 peripheral proteins of the oxygen-evolving complex and a large number of cofactors. It forms dimeric complexes. The cofactor is The D1/D2 heterodimer binds P680, chlorophylls that are the primary electron donor of PSII, and subsequent electron acceptors. It shares a non-heme iron and each subunit binds pheophytin, quinone, additional chlorophylls, carotenoids and lipids. D1 provides most of the ligands for the Mn4-Ca-O5 cluster of the oxygen-evolving complex (OEC). There is also a Cl(-1) ion associated with D1 and D2, which is required for oxygen evolution. The PSII complex binds additional chlorophylls, carotenoids and specific lipids.. In terms of processing, tyr-161 forms a radical intermediate that is referred to as redox-active TyrZ, YZ or Y-Z. Post-translationally, C-terminally processed by CTPA; processing is essential to allow assembly of the oxygen-evolving complex and thus photosynthetic growth.

It localises to the plastid. The protein resides in the chloroplast thylakoid membrane. The catalysed reaction is 2 a plastoquinone + 4 hnu + 2 H2O = 2 a plastoquinol + O2. Functionally, photosystem II (PSII) is a light-driven water:plastoquinone oxidoreductase that uses light energy to abstract electrons from H(2)O, generating O(2) and a proton gradient subsequently used for ATP formation. It consists of a core antenna complex that captures photons, and an electron transfer chain that converts photonic excitation into a charge separation. The D1/D2 (PsbA/PsbD) reaction center heterodimer binds P680, the primary electron donor of PSII as well as several subsequent electron acceptors. This Palmaria palmata (Dulse) protein is Photosystem II protein D1.